A 61-amino-acid chain; its full sequence is MPEKTKLGNSLSFNYFLLLVGVLTFLGYYFLGDSNIMISWLLAMCPITVGIANIGRIKNEK.

This is an uncharacterized protein from Staphylococcus epidermidis.